A 181-amino-acid polypeptide reads, in one-letter code: MELSQTALFIGSIINLNALVLILRAWLQFARVDYYNPVSTFAVKMTDPVLKPLRKIAPTVKNIDTSALLLIFIIGMLKGIIYFGLSVNVLLVLGVLTVLKSIGLAIFYVLFIGAVLSWFNRGNNSISYAFYQLSEPLLKPIRRLLPTLGMIDFSPMVVMFILLFLNNFMLDLLGGLWIIAG.

The next 4 membrane-spanning stretches (helical) occupy residues 3–23, 67–87, 92–112, and 159–179; these read LSQT…VLIL, ALLL…GLSV, VLGV…VLFI, and MFIL…LWII.

It belongs to the YggT family.

Its subcellular location is the cell membrane. This is an uncharacterized protein from Haemophilus influenzae (strain ATCC 51907 / DSM 11121 / KW20 / Rd).